A 197-amino-acid polypeptide reads, in one-letter code: Cold-regulated 413 plasma membrane protein 1 (197 aa).

At 1 to 40 the chain is on the extracellular side; sequence MPMKSLRNDHGTLKAMIGSDFNELTIAAKNLATHAFTLTG. A helical membrane pass occupies residues 41–61; sequence LGFGTSVLEWVASIAAIYLLV. The Cytoplasmic portion of the chain corresponds to 62–71; that stretch reads LDRTNWKTNM. The chain crosses the membrane as a helical span at residues 72-92; sequence LTSLLIPYIFFSLPSLIFGIF. The Extracellular segment spans residues 93–94; sequence RG. Residues 95–115 traverse the membrane as a helical segment; the sequence is EIGKWIAFVAVVVQLFFPKHA. Residues 116–117 lie on the Cytoplasmic side of the membrane; sequence RE. Residues 118–138 traverse the membrane as a helical segment; the sequence is YLELPVALVLLAVVAPNLIAG. The Extracellular portion of the chain corresponds to 139–141; it reads TFR. A helical transmembrane segment spans residues 142–162; sequence DSWIGLAICLGIGCYLLQEHI. The Cytoplasmic segment spans residues 163–176; sequence RASGGFRNAFTKAN. The chain crosses the membrane as a helical span at residues 177 to 197; the sequence is GISNTVGIICLVVFPVWALIF.

This sequence belongs to the Cold-regulated 413 protein family.

It is found in the membrane. The sequence is that of Cold-regulated 413 plasma membrane protein 1 (COR413PM1) from Arabidopsis thaliana (Mouse-ear cress).